A 280-amino-acid polypeptide reads, in one-letter code: Beta-glucosyl-HMC-alpha-glucosyl-transferase (280 aa).

It functions in the pathway genetic information processing; DNA modification. Transfers a gentiobiosyl-group on a hydroxymethylcytosine residue in DNA. Is involved in a DNA modification process to protects the phage genome against its own nucleases and the host restriction endonuclease system. The protein is Beta-glucosyl-HMC-alpha-glucosyl-transferase of Enterobacteria phage T2 (Bacteriophage T2).